Here is a 72-residue protein sequence, read N- to C-terminus: Translation initiation factor IF-1 (72 aa).

The S1-like domain occupies 1–72 (MSKSDIIEMQ…TRGRITWRAK (72 aa)).

The protein belongs to the IF-1 family. In terms of assembly, component of the 30S ribosomal translation pre-initiation complex which assembles on the 30S ribosome in the order IF-2 and IF-3, IF-1 and N-formylmethionyl-tRNA(fMet); mRNA recruitment can occur at any time during PIC assembly.

The protein localises to the cytoplasm. Functionally, one of the essential components for the initiation of protein synthesis. Stabilizes the binding of IF-2 and IF-3 on the 30S subunit to which N-formylmethionyl-tRNA(fMet) subsequently binds. Helps modulate mRNA selection, yielding the 30S pre-initiation complex (PIC). Upon addition of the 50S ribosomal subunit IF-1, IF-2 and IF-3 are released leaving the mature 70S translation initiation complex. This chain is Translation initiation factor IF-1, found in Clostridium perfringens (strain 13 / Type A).